We begin with the raw amino-acid sequence, 376 residues long: MTAYGGEMTKERRKITVGLLFGGRSAEHEVSRASAANILRALNSDRYDVYLIGISRDGRWFACDSGNGAGTGSTALTISDEAPEIGLVPGGRGRLVHCDGPTGSDAGSIDVAFPILHGPNGEDGTVQGALELADVSFVGSSVTGSAVAMDKEVSKRLMRDAGLPVVPFLTTTASSRIEYAAAVAALGTPDLFVKPANLGSSVGVSRARSEEEFAASCALAFRYDRKILVEQALNGAREIECSVLEESTGDIRASGLGEIVRASEHGFYSYQAKYIDADGAALHIPADLPLLQARRLQELAVEVFNVLCCEGMARVDFFVQGDEVFVNEANTLPGFTSSSMYPKLWEASGLSQTDLMDKLIAHAFARHERRRALSFG.

Residues 155-361 (KRLMRDAGLP…QTDLMDKLIA (207 aa)) enclose the ATP-grasp domain. Residue 184-239 (AALGTPDLFVKPANLGSSVGVSRARSEEEFAASCALAFRYDRKILVEQALNGAREI) participates in ATP binding. D316, E328, and N330 together coordinate Mg(2+).

This sequence belongs to the D-alanine--D-alanine ligase family. It depends on Mg(2+) as a cofactor. Mn(2+) serves as cofactor.

It localises to the cytoplasm. It catalyses the reaction 2 D-alanine + ATP = D-alanyl-D-alanine + ADP + phosphate + H(+). It participates in cell wall biogenesis; peptidoglycan biosynthesis. Cell wall formation. The polypeptide is D-alanine--D-alanine ligase B (Bradyrhizobium diazoefficiens (strain JCM 10833 / BCRC 13528 / IAM 13628 / NBRC 14792 / USDA 110)).